The primary structure comprises 281 residues: Oxidoreductase-like protein SRL4 (281 aa).

NADP(+) is bound by residues Leu-39, Thr-60, Lys-67, Lys-152, and Lys-197. The active-site Lowers pKa of active site Tyr is Lys-197.

The protein belongs to the short-chain dehydrogenases/reductases (SDR) family.

In terms of biological role, may be involved in the regulation of dNTP production. Induces the SOS system when expressed in E.coli, therefore, it may play a role in DNA metabolism and/or in genome stability. The sequence is that of Oxidoreductase-like protein SRL4 (SRL4) from Saccharomyces cerevisiae (strain ATCC 204508 / S288c) (Baker's yeast).